Consider the following 452-residue polypeptide: MISQFFILSSKGDPLIYKDFRGDSGGRDVAELFYRKLTGLPGDESPVVMHHDDRHFIHIRHSGLYLVATTSENISPFSLLELLSRLATLLGDYCGSLSEGTISRNVALVYELLDEVLDYGYVQTTSMEMLRNFIQTEAVVSKPFSLFDLSSVGLFGAETQQSKVAPSTAASRPVLASRSDQSQKNEVFLDVVERLSVLIASNGSLLKVDVQGEIRLKSFLPSGSEMRIGLTEEFCVGKSELRGYGPGIRVDEVSFHSSVLLEEFESHRILRLQPPQGELTVMRYQLSDDLPSPLPFRLFPSVQWDRGSGRLQVYLKLRCDLPPKSQALNVRLHLPLPRGVVSLSQELSGPEQKAELGEGALRWDLPRVQGGSQLSGLFQMDVPGLPGPPGQGHSATAPLGLGPASLSFELPRHTCSGLQVRFLRLAFRPCGSTSPHKWVRHLSHSDAYVIRI.

Residues 184 to 451 (KNEVFLDVVE…LSHSDAYVIR (268 aa)) form the MHD domain.

The protein belongs to the adaptor complexes medium subunit family. In terms of assembly, adaptor protein complex 4 (AP-4) is a heterotetramer composed of two large adaptins (epsilon-type subunit AP4E1 and beta-type subunit AP4B1), a medium adaptin (mu-type subunit AP4M1) and a small adaptin (sigma-type AP4S1). Interacts with tyrosine-based sorting signals on the cytoplasmic tail of cargo proteins such as APP, ATG9A, LAMP2 and NAGPA. Interacts with the C-terminal domain of GRID2. Interacts with GRIA1 and GRIA2; the interaction is indirect via CACNG3. Interacts with CACNG3; CACNG3 associates GRIA1 and GRIA2 with the adaptor protein complex 4 (AP-4) to target them to the somatodendritic compartment of neurons. Interacts with HOOK1 and HOOK2; the interactions are direct, mediate the interaction between FTS-Hook-FHIP (FHF) complex and AP-4 and the perinuclear distribution of AP-4.

It is found in the golgi apparatus. Its subcellular location is the trans-Golgi network membrane. The protein localises to the early endosome. In terms of biological role, component of the adaptor protein complex 4 (AP-4). Adaptor protein complexes are vesicle coat components involved both in vesicle formation and cargo selection. They control the vesicular transport of proteins in different trafficking pathways. AP-4 forms a non clathrin-associated coat on vesicles departing the trans-Golgi network (TGN) and may be involved in the targeting of proteins from the trans-Golgi network (TGN) to the endosomal-lysosomal system. It is also involved in protein sorting to the basolateral membrane in epithelial cells and the proper asymmetric localization of somatodendritic proteins in neurons. Within AP-4, the mu-type subunit AP4M1 is directly involved in the recognition and binding of tyrosine-based sorting signals found in the cytoplasmic part of cargos. The adaptor protein complex 4 (AP-4) may also recognize other types of sorting signal. This Canis lupus familiaris (Dog) protein is AP-4 complex subunit mu-1.